A 369-amino-acid chain; its full sequence is 4beta-methylsterol monooxygenase (369 aa).

The region spanning 29 to 135 (WYVVEIDGRL…VKAQWGLIWL (107 aa)) is the Rieske domain. [2Fe-2S] cluster-binding residues include Cys-70, His-72, Cys-89, and His-92.

It depends on [2Fe-2S] cluster as a cofactor.

It carries out the reaction a 3beta-hydroxy-4,4-dimethylsteroid + 3 NADH + 3 O2 + 2 H(+) = a 3beta-hydroxy-4alpha-methylsteroid-4beta-carboxylate + 3 NAD(+) + 4 H2O. The catalysed reaction is 4,4-dimethyl-5alpha-cholesta-8,24-dien-3beta-ol + 3 NADH + 3 O2 + 2 H(+) = 4beta-carboxy-4alpha-methyl-5alpha-cholesta-8,24-dien-3beta-ol + 3 NAD(+) + 4 H2O. It catalyses the reaction a 3beta-hydroxy-4,4-dimethylsteroid + NADH + O2 + H(+) = a 3beta-hydroxy-4beta-hydroxymethyl-4alpha-methylsteroid + NAD(+) + H2O. The enzyme catalyses a 3beta-hydroxy-4beta-hydroxymethyl-4alpha-methylsteroid + NADH + O2 + H(+) = a 3beta-hydroxy-4beta-formyl-4alpha-methylsteroid + NAD(+) + 2 H2O. It carries out the reaction a 3beta-hydroxy-4beta-formyl-4alpha-methylsteroid + NADH + O2 = a 3beta-hydroxy-4alpha-methylsteroid-4beta-carboxylate + NAD(+) + H2O. The catalysed reaction is 4,4-dimethyl-5alpha-cholesta-8,24-dien-3beta-ol + NADH + O2 + H(+) = 4beta-hydroxymethyl-4alpha-methylzymosterol + NAD(+) + H2O. It catalyses the reaction 4beta-hydroxymethyl-4alpha-methylzymosterol + NADH + O2 + H(+) = 4beta-formylmethyl-4alpha-methyl-5alpha-cholesta-8,24-dien-3beta-ol + NAD(+) + 2 H2O. The enzyme catalyses 4beta-formylmethyl-4alpha-methyl-5alpha-cholesta-8,24-dien-3beta-ol + NADH + O2 = 4beta-carboxy-4alpha-methyl-5alpha-cholesta-8,24-dien-3beta-ol + NAD(+) + H2O. The protein operates within steroid biosynthesis; sterol biosynthesis. Participates in the biosynthesis of bacterial sterols. Together with SdmB, removes one methyl group from the C-4 position of 4,4-dimethylated steroid molecules. SdmA oxidizes the sterol 4beta-methyl group into first a hydroxyl, then an aldehyde and finally a carboxylic acid group. This Methylococcus capsulatus (strain ATCC 33009 / NCIMB 11132 / Bath) protein is 4beta-methylsterol monooxygenase.